We begin with the raw amino-acid sequence, 417 residues long: Serine/threonine-protein phosphatase 4 regulatory subunit 2 (417 aa).

Polar residues-rich tracts occupy residues 140–149, 158–170, and 186–196; these read EKNNSNSLNR, NSPS…NING, and APMTTNGLPES. Residues 140-417 form a disordered region; that stretch reads EKNNSNSLNR…EVTDEPMEQD (278 aa). Ser-159 bears the Phosphoserine mark. Residues 197 to 213 show a composition bias toward basic and acidic residues; that stretch reads TDSKEANLQQNEEKNHS. The span at 214-226 shows a compositional bias: low complexity; that stretch reads DSSTSESEVSSVS. Position 226 is a phosphoserine (Ser-226). A compositionally biased stretch (basic and acidic residues) spans 231–258; the sequence is KHPDEDAVEAEGHEVKRLRFDKEGEVRE. Over residues 259-269 the composition is skewed to polar residues; the sequence is TASQTTSSEIS. Residues 283 to 297 are compositionally biased toward basic and acidic residues; the sequence is QDKDKDSRCTRQHCT. A compositionally biased stretch (acidic residues) spans 298-311; sequence EEDEEEDEEEEEES. A compositionally biased stretch (basic and acidic residues) spans 318-327; the sequence is MIPERKNQEK. Residues 338–350 show a composition bias toward acidic residues; the sequence is ETSEENNQMEESD. Over residues 353–363 the composition is skewed to basic and acidic residues; sequence QAEKDLLHSEG. Positions 366-375 are enriched in low complexity; that stretch reads NEGPVSSSSS. Residues 385–399 show a composition bias toward polar residues; the sequence is GSNSSKTGEILSESS. Over residues 400–417 the composition is skewed to acidic residues; it reads MENDDEATEVTDEPMEQD.

It belongs to the PPP4R2 family. In terms of assembly, serine/threonine-protein phosphatase 4 (PP4) occurs in different assemblies of the catalytic and one or more regulatory subunits. Component of the PP4 complexes PPP4C-PPP4R2, PPP4C-PPP4R2-PPP4R3A and PPP4C-PPP4R2-PPP4R3B. The PPP4C-PPP4R2 complex appears to be a tetramer composed of 2 molecules of PPP4C and 2 molecules of PPP4R2. Interacts with DDX20/GEMIN3 and GEMIN4. Interacts with RPA2; this DNA damage-dependent interaction recruits PPP4C leading to RPA2 dephosphorylation. In terms of tissue distribution, widely expressed.

It is found in the cytoplasm. It localises to the cytoskeleton. The protein resides in the microtubule organizing center. Its subcellular location is the centrosome. The protein localises to the nucleus. In terms of biological role, regulatory subunit of serine/threonine-protein phosphatase 4 (PP4). May regulate the activity of PPP4C at centrosomal microtubule organizing centers. Its interaction with the SMN complex leads to enhance the temporal localization of snRNPs, suggesting a role of PPP4C in maturation of spliceosomal snRNPs. The PPP4C-PPP4R2-PPP4R3A PP4 complex specifically dephosphorylates H2AX phosphorylated on 'Ser-140' (gamma-H2AX) generated during DNA replication and required for DNA double strand break repair. Mediates RPA2 dephosphorylation by recruiting PPP4C to RPA2 in a DNA damage-dependent manner. RPA2 dephosphorylation is required for the efficient RPA2-mediated recruitment of RAD51 to chromatin following double strand breaks, an essential step for DNA repair. This chain is Serine/threonine-protein phosphatase 4 regulatory subunit 2 (PPP4R2), found in Homo sapiens (Human).